The chain runs to 807 residues: Glycerol-3-phosphate acyltransferase (807 aa).

Positions C308–M313 match the HXXXXD motif motif.

The protein belongs to the GPAT/DAPAT family.

It localises to the cell inner membrane. It catalyses the reaction sn-glycerol 3-phosphate + an acyl-CoA = a 1-acyl-sn-glycero-3-phosphate + CoA. It functions in the pathway phospholipid metabolism; CDP-diacylglycerol biosynthesis; CDP-diacylglycerol from sn-glycerol 3-phosphate: step 1/3. In Shewanella baltica (strain OS155 / ATCC BAA-1091), this protein is Glycerol-3-phosphate acyltransferase.